Consider the following 95-residue polypeptide: Feather keratin B-4 (95 aa).

N-acetylserine is present on serine 1.

It belongs to the avian keratin family. The avian keratins (F-ker, S-ker, C-ker and B-ker) are a complex mixture of very similar polypeptides.

This is Feather keratin B-4 from Columba livia (Rock dove).